Consider the following 620-residue polypeptide: 1-deoxy-D-xylulose-5-phosphate synthase (620 aa).

Thiamine diphosphate contacts are provided by residues histidine 75 and 116 to 118 (AHS). Mg(2+) is bound at residue aspartate 147. Thiamine diphosphate-binding positions include 148-149 (GA), asparagine 177, tyrosine 284, and glutamate 366. Asparagine 177 contributes to the Mg(2+) binding site.

It belongs to the transketolase family. DXPS subfamily. In terms of assembly, homodimer. Mg(2+) is required as a cofactor. Requires thiamine diphosphate as cofactor.

It catalyses the reaction D-glyceraldehyde 3-phosphate + pyruvate + H(+) = 1-deoxy-D-xylulose 5-phosphate + CO2. It functions in the pathway metabolic intermediate biosynthesis; 1-deoxy-D-xylulose 5-phosphate biosynthesis; 1-deoxy-D-xylulose 5-phosphate from D-glyceraldehyde 3-phosphate and pyruvate: step 1/1. Catalyzes the acyloin condensation reaction between C atoms 2 and 3 of pyruvate and glyceraldehyde 3-phosphate to yield 1-deoxy-D-xylulose-5-phosphate (DXP). This chain is 1-deoxy-D-xylulose-5-phosphate synthase, found in Bordetella avium (strain 197N).